The sequence spans 34 residues: COP9 signalosome complex subunit 5a (34 aa).

The protein belongs to the peptidase M67A family. CSN5 subfamily. As to quaternary structure, component of the CSN complex, probably composed of CSN1, CSN2, CSN3, CSN4, CSN5 (CSN5A or CSN5B), CSN6 (CSN6A or CSN6B), CSN7 and CSN8. The cofactor is a divalent metal cation.

It is found in the cytoplasm. The protein resides in the nucleus. Its function is as follows. Probable protease subunit of the COP9 signalosome complex (CSN), a complex involved in various cellular and developmental processes such as photomorphogenesis and auxin and jasmonate responses. The CSN complex is an essential regulator of the ubiquitin (Ubl) conjugation pathway by mediating the deneddylation of the cullin subunits of the SCF-type E3 ligase complexes, leading to decrease the Ubl ligase activity of SCF. In the complex, it probably acts as the catalytic center that mediates the cleavage of Nedd8 from cullins. It however has no metalloprotease activity by itself and requires the other subunits of the CSN complex. The CSN complex is involved in repression of photomorphogenesis in darkness by regulating the activity of COP1-containing Ubl ligase complexes. The chain is COP9 signalosome complex subunit 5a (CSN5A) from Brassica oleracea (Wild cabbage).